A 254-amino-acid chain; its full sequence is Protein EFFECTOR OF TRANSCRIPTION 3 (254 aa).

The region spanning 103–152 (RCTGLYELGVGVIGQDQGQNFDPDNNVLGVYVGQCVDVKSRLQDYGRRGG) is the GIY-YIG domain.

Its subcellular location is the cytoplasm. The polypeptide is Protein EFFECTOR OF TRANSCRIPTION 3 (Arabidopsis thaliana (Mouse-ear cress)).